Reading from the N-terminus, the 470-residue chain is Cannabinoid receptor 1 (470 aa).

The Extracellular portion of the chain corresponds to 1-121 (MKSILDGLAD…TPSQQLVIAA (121 aa)). Positions 2–23 (KSILDGLADTTFRTITTDLLYL) are required for mitochondrial localization. N-linked (GlcNAc...) asparagine glycosylation is found at Asn78 and Asn84. A helical transmembrane segment spans residues 122-142 (LSIILGTFTVLENMLVLVVIV). Residues 143–154 (QSRSLRCRPSYH) are Cytoplasmic-facing. Residues 155 to 175 (FIGSLAVADLLGSVIFVYSFV) traverse the membrane as a helical segment. At 176–187 (DFHVFHRKDSPN) the chain is on the extracellular side. The chain crosses the membrane as a helical span at residues 188–208 (VFLFKLGGVTASFTASVGSLF). At 209–232 (LTAIDRYISIHRPMSYKRIVTRTK) the chain is on the cytoplasmic side. A helical transmembrane segment spans residues 233–253 (AVIAFCMMWTIAIVIAVLPLF). The Extracellular portion of the chain corresponds to 254-277 (GWNCIKLRSVCSDIFPLIDETYLM). The chain crosses the membrane as a helical span at residues 278–298 (FWIGVTSVLLLFIVYAYMYIL). At 299-344 (WKAHNHAVRMLQRGTQKSIIVHTSEDGKVHITRPDQTRMDIRLAKT) the chain is on the cytoplasmic side. A helical transmembrane segment spans residues 345–365 (LVLILVVLIICWGPLMAIMVY). Over 366-377 (DVFGKINKTIKT) the chain is Extracellular. The N-linked (GlcNAc...) asparagine glycan is linked to Asn372. The helical transmembrane segment at 378-398 (VFAFCSVLCLLNSTVNPIIYA) threads the bilayer. The Cytoplasmic portion of the chain corresponds to 399–470 (LRSKDLRNAF…VSTDTSAEAV (72 aa)). A lipid anchor (S-palmitoyl cysteine) is attached at Cys415.

The protein belongs to the G-protein coupled receptor 1 family. Palmitoylation at Cys-415 is important for recruitment at both plasma membrane and lipid rafts and association with G protein alpha subunits. In terms of tissue distribution, expressed in neurons, especially in the olfactory bulbs, telencephalic pallium, and hypothalamus and also in the midbrain and hindbrain (in the mesencephalic tegmentum and dorsolateral rhombencephalon). Expressed also in the spinal cord.

The protein localises to the cell membrane. It localises to the mitochondrion outer membrane. It is found in the cell projection. Its subcellular location is the axon. The protein resides in the presynapse. Functionally, G-protein coupled receptor for cannabinoids. Mediates many cannabinoid-induced effects in the central nervous system (CNS), as well as in peripheral tissues. Regulates cellular respiration and energy production in response to cannabinoids. Signaling typically involves reduction in cyclic AMP. This is Cannabinoid receptor 1 (cnr1) from Xenopus laevis (African clawed frog).